The chain runs to 512 residues: Probable malate:quinone oxidoreductase (512 aa).

It belongs to the MQO family. The cofactor is FAD.

It carries out the reaction (S)-malate + a quinone = a quinol + oxaloacetate. The protein operates within carbohydrate metabolism; tricarboxylic acid cycle; oxaloacetate from (S)-malate (quinone route): step 1/1. This chain is Probable malate:quinone oxidoreductase, found in Rhodococcus erythropolis (strain PR4 / NBRC 100887).